Consider the following 166-residue polypeptide: Large ribosomal subunit protein uL11 (166 aa).

It belongs to the universal ribosomal protein uL11 family.

In terms of biological role, this protein binds directly to 26S ribosomal RNA. This chain is Large ribosomal subunit protein uL11 (RPL12), found in Prunus armeniaca (Apricot).